Reading from the N-terminus, the 280-residue chain is Dexamethasone-induced Ras-related protein 1 (280 aa).

C11 bears the S-nitrosocysteine mark. 31–38 contacts GTP; the sequence is GSSKVGKT. Positions 53–61 match the Effector region motif; the sequence is YTPTIEDFH. GTP is bound by residues 78–82 and 145–148; these read DTSGN and NKGD. C277 is subject to Cysteine methyl ester. A lipid anchor (S-farnesyl cysteine) is attached at C277. The propeptide at 278–280 is removed in mature form; sequence VIS.

Belongs to the small GTPase superfamily. RasD family. In terms of assembly, forms a ternary complex with CAPON and NOS1. Component of a complex, at least composed of APBB1, RASD1/DEXRAS1 and APP. Interacts with APBB1/FE65. Forms. S-nitrosylation stimulates guanine-nucleotide exchange activity. In terms of tissue distribution, prominently found in brain at both mRNA and protein levels. Moderate expression in testis and lung. Slightly expressed in heart, spleen, skeletal muscle, liver and kidney.

It localises to the cell membrane. The protein resides in the cytoplasm. The protein localises to the perinuclear region. It is found in the nucleus. Functionally, small GTPase. Negatively regulates the transcription regulation activity of the APBB1/FE65-APP complex via its interaction with APBB1/FE65. This chain is Dexamethasone-induced Ras-related protein 1 (Rasd1), found in Rattus norvegicus (Rat).